The chain runs to 238 residues: Ribonuclease 3 (238 aa).

The region spanning Y17–G140 is the RNase III domain. E53 provides a ligand contact to Mg(2+). Residue D57 is part of the active site. Mg(2+) is bound by residues S126 and E129. Residue E129 is part of the active site. In terms of domain architecture, DRBM spans D167–E236.

The protein belongs to the ribonuclease III family. Homodimer. Mg(2+) is required as a cofactor.

Its subcellular location is the cytoplasm. It catalyses the reaction Endonucleolytic cleavage to 5'-phosphomonoester.. Its function is as follows. Digests double-stranded RNA. Involved in the processing of primary rRNA transcript to yield the immediate precursors to the large and small rRNAs (23S and 16S). Processes some mRNAs, and tRNAs when they are encoded in the rRNA operon. Processes pre-crRNA and tracrRNA of type II CRISPR loci if present in the organism. In Helicobacter pylori (strain Shi470), this protein is Ribonuclease 3.